Reading from the N-terminus, the 126-residue chain is Small ribosomal subunit protein bS6 (126 aa).

Residues Leu104–Ala126 are disordered. Over residues Ala105–Phe120 the composition is skewed to basic and acidic residues.

This sequence belongs to the bacterial ribosomal protein bS6 family.

Its function is as follows. Binds together with bS18 to 16S ribosomal RNA. The polypeptide is Small ribosomal subunit protein bS6 (Caulobacter vibrioides (strain ATCC 19089 / CIP 103742 / CB 15) (Caulobacter crescentus)).